The following is a 340-amino-acid chain: Zinc finger protein 367 (340 aa).

Residues 101–140 (GAPQSSASVAAVSGGEDEEEASSPDSGHLKDGIRRGRPRA) are disordered. Over residues 127–140 (GHLKDGIRRGRPRA) the composition is skewed to basic and acidic residues. C2H2-type zinc fingers lie at residues 157–179 (IRCN…KRTH) and 185–209 (YLCD…QRLH). The interval 280–317 (KGKLVQKADQEQQDPLEYLQSDEEDDEKSGAQRRLQEQ) is disordered. A coiled-coil region spans residues 299 to 332 (QSDEEDDEKSGAQRRLQEQRERLHGALALIELAN). A Phosphoserine modification is found at Ser300. The span at 307 to 317 (KSGAQRRLQEQ) shows a compositional bias: basic and acidic residues.

It belongs to the krueppel C2H2-type zinc-finger protein family. As to expression, expressed in bone marrow and ovary.

It localises to the nucleus. Transcriptional activator. Isoform 1 may be involved in transcriptional activation of erythroid genes. The chain is Zinc finger protein 367 (Znf367) from Mus musculus (Mouse).